The primary structure comprises 200 residues: MELQVVGANALTVSETTFGREFNEALIHQVVVAYAAGARQGSRAQKTRAEVSGSGKKPWRQKGTGRARSGDIKSPIWRSGGVTFAAKPQDHSQKVNKKMYRGAIKSILSELVRQDRLVVVEKFEIDVPKTKVLVQKLKDMALTDALIITASLDENLFLAARNLYKVDVRDVQAIDPVSLIAFDKVVVTVDAVKQIEEMFA.

The disordered stretch occupies residues arginine 43–aspartate 71.

It belongs to the universal ribosomal protein uL4 family. In terms of assembly, part of the 50S ribosomal subunit.

Functionally, one of the primary rRNA binding proteins, this protein initially binds near the 5'-end of the 23S rRNA. It is important during the early stages of 50S assembly. It makes multiple contacts with different domains of the 23S rRNA in the assembled 50S subunit and ribosome. In terms of biological role, forms part of the polypeptide exit tunnel. The polypeptide is Large ribosomal subunit protein uL4 (Histophilus somni (strain 2336) (Haemophilus somnus)).